The following is a 242-amino-acid chain: E3 ubiquitin-protein ligase ZNRF2 (242 aa).

The tract at residues 1–141 is disordered; sequence MGAKQSGPAA…VGGSPGGPRL (141 aa). A lipid anchor (N-myristoyl glycine) is attached at Gly-2. Phosphoserine is present on residues Ser-19, Ser-21, and Ser-25. The segment covering 19 to 29 has biased composition (low complexity); that stretch reads SGSDLPSSSSG. A compositionally biased stretch (gly residues) spans 30–41; that stretch reads GANGTAGGGGGA. Residues 59 to 97 show a composition bias toward low complexity; that stretch reads PSASGGAAAAAAAPAAPAAPRSRSLGGAVGSVASGARAA. Phosphoserine is present on residues Ser-82, Ser-89, Ser-113, Ser-116, and Ser-135. Residues 99-118 are compositionally biased toward polar residues; sequence SPFSIPNSSSGPYGSQDSVH. Residue Ser-145 is modified to Phosphoserine; by MTOR. 2 positions are modified to phosphoserine: Ser-151 and Ser-193. The RING-type; atypical zinc-finger motif lies at 199 to 240; sequence CAICLEELQQGDTIARLPCLCIYHKGCIDEWFEVNRSCPEHP.

As to quaternary structure, interacts with UBE2N. Interacts with ZNRF1. Interacts (when phosphorylated) with YWHAE. Phosphorylated; leading to binding to YWHAE. Phosphorylated by MTOR at Ser-145 and dephosphorylated by PP6C. Ser-145 phosphorylation stimulates vesicle-to-cytosol translocation. As to expression, highly expressed in the brain, with higher expression during development than in adult. Expressed also in mammary glands, testis, colon and kidney.

It localises to the endosome membrane. The protein resides in the lysosome membrane. The protein localises to the presynaptic cell membrane. It is found in the cytoplasm. It carries out the reaction S-ubiquitinyl-[E2 ubiquitin-conjugating enzyme]-L-cysteine + [acceptor protein]-L-lysine = [E2 ubiquitin-conjugating enzyme]-L-cysteine + N(6)-ubiquitinyl-[acceptor protein]-L-lysine.. It participates in protein modification; protein ubiquitination. In terms of biological role, E3 ubiquitin-protein ligase that plays a role in the establishment and maintenance of neuronal transmission and plasticity. Ubiquitinates the Na(+)/K(+) ATPase alpha-1 subunit/ATP1A1 and thereby influences its endocytosis and/or degradation. Acts also as a positive regulator of mTORC1 activation by amino acids, which functions upstream of the V-ATPase and of Rag-GTPases. In turn, phosphorylation by mTOR leads to its inhibition via targeting to the cytosol allowing a self-regulating feedback mechanism. The chain is E3 ubiquitin-protein ligase ZNRF2 (ZNRF2) from Homo sapiens (Human).